The following is an 85-amino-acid chain: Small ribosomal subunit protein uS17 (85 aa).

It belongs to the universal ribosomal protein uS17 family. As to quaternary structure, part of the 30S ribosomal subunit.

One of the primary rRNA binding proteins, it binds specifically to the 5'-end of 16S ribosomal RNA. The protein is Small ribosomal subunit protein uS17 of Acinetobacter baumannii (strain AB307-0294).